The chain runs to 184 residues: NADH-quinone oxidoreductase subunit B (184 aa).

The [4Fe-4S] cluster site is built by Cys63, Cys64, Cys128, and Cys158.

This sequence belongs to the complex I 20 kDa subunit family. As to quaternary structure, NDH-1 is composed of 14 different subunits. Subunits NuoB, C, D, E, F, and G constitute the peripheral sector of the complex. It depends on [4Fe-4S] cluster as a cofactor.

It localises to the cell inner membrane. It catalyses the reaction a quinone + NADH + 5 H(+)(in) = a quinol + NAD(+) + 4 H(+)(out). Functionally, NDH-1 shuttles electrons from NADH, via FMN and iron-sulfur (Fe-S) centers, to quinones in the respiratory chain. The immediate electron acceptor for the enzyme in this species is believed to be ubiquinone. Couples the redox reaction to proton translocation (for every two electrons transferred, four hydrogen ions are translocated across the cytoplasmic membrane), and thus conserves the redox energy in a proton gradient. The polypeptide is NADH-quinone oxidoreductase subunit B (Xylella fastidiosa (strain M23)).